The following is a 206-amino-acid chain: Large ribosomal subunit protein uL4 (206 aa).

Positions 48-59 (THDTKTRSEVRG) are enriched in basic and acidic residues. The interval 48 to 77 (THDTKTRSEVRGGGRKPWRQKGTGRARHGS) is disordered. Positions 60–77 (GGRKPWRQKGTGRARHGS) are enriched in basic residues.

Belongs to the universal ribosomal protein uL4 family. Part of the 50S ribosomal subunit.

In terms of biological role, one of the primary rRNA binding proteins, this protein initially binds near the 5'-end of the 23S rRNA. It is important during the early stages of 50S assembly. It makes multiple contacts with different domains of the 23S rRNA in the assembled 50S subunit and ribosome. Functionally, forms part of the polypeptide exit tunnel. The protein is Large ribosomal subunit protein uL4 of Pelotomaculum thermopropionicum (strain DSM 13744 / JCM 10971 / SI).